Reading from the N-terminus, the 207-residue chain is Small ribosomal subunit protein uS4 (207 aa).

The disordered stretch occupies residues 31–55 (KCKLDSKPGQHGRTSGARTSDYGTQ). A compositionally biased stretch (polar residues) spans 42–53 (GRTSGARTSDYG). The S4 RNA-binding domain occupies 97-160 (SRLDNVVYRM…KKQARIVEAL (64 aa)).

This sequence belongs to the universal ribosomal protein uS4 family. As to quaternary structure, part of the 30S ribosomal subunit. Contacts protein S5. The interaction surface between S4 and S5 is involved in control of translational fidelity.

In terms of biological role, one of the primary rRNA binding proteins, it binds directly to 16S rRNA where it nucleates assembly of the body of the 30S subunit. Its function is as follows. With S5 and S12 plays an important role in translational accuracy. This is Small ribosomal subunit protein uS4 from Burkholderia ambifaria (strain MC40-6).